Reading from the N-terminus, the 39-residue chain is Large ribosomal subunit protein bL36 (39 aa).

The protein belongs to the bacterial ribosomal protein bL36 family.

The chain is Large ribosomal subunit protein bL36 from Lactiplantibacillus plantarum (strain ATCC BAA-793 / NCIMB 8826 / WCFS1) (Lactobacillus plantarum).